A 93-amino-acid polypeptide reads, in one-letter code: Consomatin G1 (93 aa).

An N-terminal signal peptide occupies residues 1–22; that stretch reads MQTAYWVMLMMMVCITAPLPEG. Positions 23–69 are excised as a propeptide; that stretch reads GKPNSGIRGLVPNDLTPQHTLRSLISRRQTDVLLDATLLTTPAPEQR. Cys72 and Cys77 are oxidised to a cystine. Trp74 carries the D-tryptophan modification. The propeptide occupies 79–93; sequence PRPYPWRRRDLNGKR.

It belongs to the conotoxin C superfamily. Consomatin family. Expressed by the venom duct.

The protein resides in the secreted. In terms of biological role, potently activates human somatostatin receptors (SSTR) with a specific activation of SSTR2 (EC(50)=2.6 nM). In Conus geographus (Geography cone), this protein is Consomatin G1.